The following is a 124-amino-acid chain: Ribulose bisphosphate carboxylase small subunit (124 aa).

This sequence belongs to the RuBisCO small chain family. Heterohexadecamer of 8 large and 8 small subunits.

Its function is as follows. RuBisCO catalyzes two reactions: the carboxylation of D-ribulose 1,5-bisphosphate, the primary event in carbon dioxide fixation, as well as the oxidative fragmentation of the pentose substrate. Both reactions occur simultaneously and in competition at the same active site. Although the small subunit is not catalytic it is essential for maximal activity. The polypeptide is Ribulose bisphosphate carboxylase small subunit (Hydrogenophilus thermoluteolus (Pseudomonas hydrogenothermophila)).